A 1065-amino-acid chain; its full sequence is Carbamoyl phosphate synthase large chain (1065 aa).

Residues 1–401 form a carboxyphosphate synthetic domain region; the sequence is MPKRRDIETI…SLLKAVRSLE (401 aa). Residues Arg-129, Arg-169, Gly-175, Gly-176, Arg-208, Ile-210, Glu-215, Gly-241, Ile-242, His-243, Gln-284, and Glu-298 each contribute to the ATP site. Positions 133–327 constitute an ATP-grasp 1 domain; sequence RALMNELGEP…IAKLAAKIAV (195 aa). Mg(2+) contacts are provided by Gln-284, Glu-298, and Asn-300. Mn(2+) contacts are provided by Gln-284, Glu-298, and Asn-300. The tract at residues 402-546 is oligomerization domain; sequence IGVHHLELNE…YSTYEEENES (145 aa). The segment at 547–929 is carbamoyl phosphate synthetic domain; the sequence is IVTEKPSVIV…ALYKGLVASG (383 aa). The 191-residue stretch at 671–861 folds into the ATP-grasp 2 domain; the sequence is EQALSELGIP…MANLATKAIL (191 aa). Arg-707, Arg-746, Ile-748, Glu-752, Gly-777, Val-778, His-779, Ser-780, Gln-820, and Glu-832 together coordinate ATP. Residues Gln-820, Glu-832, and Asn-834 each contribute to the Mg(2+) site. Positions 820, 832, and 834 each coordinate Mn(2+). In terms of domain architecture, MGS-like spans 930–1065; that stretch reads IHIQPHGAVL…TAMTEGLVRS (136 aa). The interval 930 to 1065 is allosteric domain; sequence IHIQPHGAVL…TAMTEGLVRS (136 aa).

Belongs to the CarB family. Composed of two chains; the small (or glutamine) chain promotes the hydrolysis of glutamine to ammonia, which is used by the large (or ammonia) chain to synthesize carbamoyl phosphate. Tetramer of heterodimers (alpha,beta)4. The cofactor is Mg(2+). Mn(2+) is required as a cofactor.

The enzyme catalyses hydrogencarbonate + L-glutamine + 2 ATP + H2O = carbamoyl phosphate + L-glutamate + 2 ADP + phosphate + 2 H(+). It catalyses the reaction hydrogencarbonate + NH4(+) + 2 ATP = carbamoyl phosphate + 2 ADP + phosphate + 2 H(+). It participates in amino-acid biosynthesis; L-arginine biosynthesis; carbamoyl phosphate from bicarbonate: step 1/1. Its pathway is pyrimidine metabolism; UMP biosynthesis via de novo pathway; (S)-dihydroorotate from bicarbonate: step 1/3. Its function is as follows. Large subunit of the glutamine-dependent carbamoyl phosphate synthetase (CPSase). CPSase catalyzes the formation of carbamoyl phosphate from the ammonia moiety of glutamine, carbonate, and phosphate donated by ATP, constituting the first step of 2 biosynthetic pathways, one leading to arginine and/or urea and the other to pyrimidine nucleotides. The large subunit (synthetase) binds the substrates ammonia (free or transferred from glutamine from the small subunit), hydrogencarbonate and ATP and carries out an ATP-coupled ligase reaction, activating hydrogencarbonate by forming carboxy phosphate which reacts with ammonia to form carbamoyl phosphate. In Bacillus caldolyticus, this protein is Carbamoyl phosphate synthase large chain.